We begin with the raw amino-acid sequence, 110 residues long: Putative caspase recruitment domain-containing protein 17P (110 aa).

Residues 1–91 enclose the CARD domain; sequence MADKVLKEKR…HLAGTLGLSA (91 aa).

Interacts with pro-CASP1. Ubiquitous.

It localises to the cytoplasm. Regulator of procaspase-1/CASP1 activation implicated in the regulation of the proteolytic maturation of pro-IL-1beta/IL1B and its release during inflammation. Inhibits the release of IL1B in response to LPS in monocytes. However, unlike CASP1, do not induce NF-kappa-B activation. This Homo sapiens (Human) protein is Putative caspase recruitment domain-containing protein 17P (CARD17P).